Reading from the N-terminus, the 87-residue chain is UPF0248 protein TSIB_1445 (87 aa).

It belongs to the UPF0248 family.

The sequence is that of UPF0248 protein TSIB_1445 from Thermococcus sibiricus (strain DSM 12597 / MM 739).